A 146-amino-acid polypeptide reads, in one-letter code: ATP synthase epsilon chain (146 aa).

This sequence belongs to the ATPase epsilon chain family. As to quaternary structure, F-type ATPases have 2 components, CF(1) - the catalytic core - and CF(0) - the membrane proton channel. CF(1) has five subunits: alpha(3), beta(3), gamma(1), delta(1), epsilon(1). CF(0) has three main subunits: a, b and c.

It localises to the cell inner membrane. Functionally, produces ATP from ADP in the presence of a proton gradient across the membrane. The sequence is that of ATP synthase epsilon chain from Rhodospirillum centenum (strain ATCC 51521 / SW).